The following is a 427-amino-acid chain: Transcobalamin-2 (427 aa).

The signal sequence occupies residues 1–18 (MRHLGALLFLLGVLGALA). Disulfide bonds link Cys-21–Cys-267, Cys-116–Cys-309, and Cys-165–Cys-205. Cob(II)alamin contacts are provided by residues Gln-104, 152–156 (TSYYQ), His-190, 190–194 (HHSVD), Asn-242, Ser-245, Gln-291, and 395–397 (WQL).

The protein belongs to the eukaryotic cobalamin transport proteins family. As to quaternary structure, interacts with CD320 (via LDL-receptor class A domains).

It localises to the secreted. In terms of biological role, primary vitamin B12-binding and transport protein. Delivers cobalamin to cells. The protein is Transcobalamin-2 (TCN2) of Pongo abelii (Sumatran orangutan).